The sequence spans 370 residues: Selenide, water dikinase 2 (370 aa).

Sec-24 is a catalytic residue. Position 24 (Sec-24) is a non-standard amino acid, selenocysteine. Residues Lys-27, 55–57 (GMD), Asp-76, and Asp-99 each bind ATP. Residue Asp-57 coordinates Mg(2+). Positions 99 and 258 each coordinate Mg(2+).

The protein belongs to the selenophosphate synthase 1 family. Class I subfamily. In terms of assembly, homodimer. Requires Mg(2+) as cofactor. In terms of tissue distribution, first expressed in the midgut anlagen with subsequent expression in a variety of tissues including the gut and nervous system.

The catalysed reaction is hydrogenselenide + ATP + H2O = selenophosphate + AMP + phosphate + 2 H(+). Its function is as follows. Synthesizes selenophosphate from selenide and ATP. The protein is Selenide, water dikinase 2 (Sps2) of Drosophila melanogaster (Fruit fly).